A 490-amino-acid polypeptide reads, in one-letter code: Betaine aldehyde dehydrogenase (490 aa).

Residues Lys174, Glu177, and 227-232 contribute to the NAD(+) site; that span reads GGIETG. Active-site residues include Glu249 and Cys283. An NAD(+)-binding site is contributed by Glu384.

It belongs to the aldehyde dehydrogenase family. As to quaternary structure, homodimer.

The catalysed reaction is betaine aldehyde + NAD(+) + H2O = glycine betaine + NADH + 2 H(+). Its pathway is amine and polyamine biosynthesis; betaine biosynthesis via choline pathway; betaine from betaine aldehyde: step 1/1. With respect to regulation, activity is stimulated by low concentrations of salts and by moderate concentrations of glycine betaine. Highly tolerant to high ionic conditions. In vitro, activity is highly stimulated in the presence of proline. Involved in the biosynthesis of the osmoprotectant glycine betaine from choline. Catalyzes the oxidation of betaine aldehyde to betaine. Shows specificity for betaine aldehyde as substrate. Can use both NAD(+) and NADP(+), but NAD(+) is strongly preferred. This chain is Betaine aldehyde dehydrogenase, found in Bacillus subtilis (strain 168).